A 1124-amino-acid polypeptide reads, in one-letter code: Phytochrome A (1124 aa).

The segment covering 1–19 (MSTTRPSQSSNNSGRSRNS) has biased composition (low complexity). The segment at 1-21 (MSTTRPSQSSNNSGRSRNSAR) is disordered. The GAF domain occupies 218–401 (SMERLCDTMV…VFAIHVNKEI (184 aa)). Cys-323 provides a ligand contact to phytochromobilin. 2 PAS domains span residues 617–687 (VTSE…LQGE) and 750–821 (DYKA…VNFG). The region spanning 901–1120 (YMKRQIRNPL…ILSVELAAAH (220 aa)) is the Histidine kinase domain.

It belongs to the phytochrome family. As to quaternary structure, homodimer. Contains one covalently linked phytochromobilin chromophore.

Its function is as follows. Regulatory photoreceptor which exists in two forms that are reversibly interconvertible by light: the Pr form that absorbs maximally in the red region of the spectrum and the Pfr form that absorbs maximally in the far-red region. Photoconversion of Pr to Pfr induces an array of morphogenic responses, whereas reconversion of Pfr to Pr cancels the induction of those responses. Pfr controls the expression of a number of nuclear genes including those encoding the small subunit of ribulose-bisphosphate carboxylase, chlorophyll A/B binding protein, protochlorophyllide reductase, rRNA, etc. It also controls the expression of its own gene(s) in a negative feedback fashion. This Pisum sativum (Garden pea) protein is Phytochrome A (PHYA).